The primary structure comprises 235 residues: Secreted RxLR effector protein 27 (235 aa).

Positions 1–25 are cleaved as a signal peptide; that stretch reads MTNLFTRHTRRSLTALALLSGGVYA. The RxLR-dEER motif lies at 36–60; the sequence is RSLRVFVTGGQVLWDYRIHFKGIER.

This sequence belongs to the RxLR effector family.

The protein resides in the secreted. The protein localises to the host cytoplasm. It localises to the host nucleus. Functionally, effector that acts as a broad suppressor of cell death to interrupt plant immunity. Inhibits cell death induced by cell death-inducing proteins, including the PAMP elicitor INF1 from P.infestans. The sequence is that of Secreted RxLR effector protein 27 from Plasmopara viticola (Downy mildew of grapevine).